The sequence spans 372 residues: Inner membrane protein YbiR (372 aa).

The Periplasmic portion of the chain corresponds to 1 to 13 (MSLPFLRTLQGDR). Helical transmembrane passes span 14–34 (FFQL…FAPK) and 35–55 (SWPA…MLLT). Over 56–85 (KGVELSGYFDVLGRKMVRRFATERRLAMFM) the chain is Periplasmic. Residues 86 to 106 (VLAAALLSTFLTNDVALFIVV) traverse the membrane as a helical segment. Residues 107-122 (PLTITLKRLCEIPVNR) lie on the Cytoplasmic side of the membrane. A helical membrane pass occupies residues 123–143 (LIIFEALAVNAGSLLTPIGNP). The Periplasmic segment spans residues 144–155 (QNILIWGRSGLS). A helical membrane pass occupies residues 156-176 (FAGFIAQMAPLAGAMMLTLLL). The Cytoplasmic segment spans residues 177-208 (LCWCCFPGKAMQYHTGVQTPEWKPRLVWSCLG). A helical membrane pass occupies residues 209 to 229 (LYIVFLTALEFKQELWGLVIV). Topologically, residues 230–247 (AAGFALLARRVVLSVDWT) are periplasmic. The chain crosses the membrane as a helical span at residues 248–268 (LLLVFMAMFIDVHLLTQLPAL). At 269-283 (QGVLGNVSHLSEPGL) the chain is on the cytoplasmic side. Residues 284–304 (WLTAIGLSQVISNVPSTILLL) form a helical membrane-spanning segment. Topologically, residues 305 to 309 (NYVPP) are periplasmic. The chain crosses the membrane as a helical span at residues 310–330 (SLLLVWAVNVGGFGLLPGSLA). Residues 331–348 (NLIALRMANDRRIWWRFH) lie on the Cytoplasmic side of the membrane. Residues 349 to 369 (LYSIPMLLWAALVGYVLLVIL) form a helical membrane-spanning segment. Residues 370–372 (PAN) lie on the Periplasmic side of the membrane.

It belongs to the CitM (TC 2.A.11) transporter family.

The protein localises to the cell inner membrane. This chain is Inner membrane protein YbiR (ybiR), found in Escherichia coli (strain K12).